The sequence spans 178 residues: Caveolin-1 (178 aa).

The residue at position 2 (Ser2) is an N-acetylserine. Ser2 bears the Phosphoserine mark. The interval Ser2–Val94 is required for homooligomerization. Residues Ser2–Ser104 are Cytoplasmic-facing. At Lys5 the chain carries N6-acetyllysine; alternate. Residue Lys5 forms a Glycyl lysine isopeptide (Lys-Gly) (interchain with G-Cter in ubiquitin); alternate linkage. Phosphotyrosine is present on Tyr6. Ser9 carries the post-translational modification Phosphoserine. Tyr14 is modified (phosphotyrosine; by ABL1). A Phosphotyrosine modification is found at Tyr25. Residues Lys26, Lys30, Lys39, Lys47, and Lys57 each participate in a glycyl lysine isopeptide (Lys-Gly) (interchain with G-Cter in ubiquitin) cross-link. Positions Asp82 to Val94 are interaction with CAVIN3. Positions Ala105–Leu125 form an intramembrane region, helical. Topologically, residues His126 to Ile178 are cytoplasmic. Residues Val131–Gln142 are interacts with SPRY1, SPRY2, SPRY3 and SPRY4. Residues Cys143 and Cys156 are each lipidated (S-palmitoyl cysteine). The interval Ser149–Phe160 is interacts with SPRY1, SPRY2, and SPRY4. Positions Phe167–Ile178 are interacts with SPRY1, SPRY2, SPRY3 and SPRY4.

Belongs to the caveolin family. Homooligomer. Interacts (via the N-terminus) with DPP4; the interaction is direct. Forms a stable heterooligomeric complex with CAV2 that targets to lipid rafts and drives caveolae formation. Interacts with PACSIN2; this interaction induces membrane tubulation. Interacts with BMX, BTK, CTNNB1, CDH1, GLIPR2, JUP, NOSTRIN, SNAP25 and STX1A. Interacts with SLC7A9. Interacts with TGFBR1. Interacts with CAVIN3 (via leucine-zipper domain) in a cholesterol-sensitive manner. Interacts with CAVIN1. Interacts with EHD2 in a cholesterol-dependent manner. Forms a ternary complex with UBXN6 and VCP; mediates CAV1 targeting to lysosomes for degradation. Interacts with ABCG1; this interaction regulates ABCG1-mediated cholesterol efflux. Interacts with NEU3; this interaction enhances NEU3 sialidase activity within caveola. Interacts (via C-terminus) with SPRY1, SPRY2 (via C-terminus), SPRY3, and SPRY4. Post-translationally, phosphorylated at Tyr-14 by ABL1 in response to oxidative stress. In terms of processing, ubiquitinated. Undergo monoubiquitination and multi- and/or polyubiquitination. Monoubiquitination of N-terminal lysines promotes integration in a ternary complex with UBXN6 and VCP which promotes oligomeric CAV1 targeting to lysosomes for degradation. Ubiquitinated by ZNRF1; leading to degradation and modulation of the TLR4-mediated immune response.

Its subcellular location is the golgi apparatus membrane. It is found in the cell membrane. The protein localises to the membrane. It localises to the caveola. The protein resides in the membrane raft. May act as a scaffolding protein within caveolar membranes. Forms a stable heterooligomeric complex with CAV2 that targets to lipid rafts and drives caveolae formation. Mediates the recruitment of CAVIN proteins (CAVIN1/2/3/4) to the caveolae. Interacts directly with G-protein alpha subunits and can functionally regulate their activity. Involved in the costimulatory signal essential for T-cell receptor (TCR)-mediated T-cell activation. Its binding to DPP4 induces T-cell proliferation and NF-kappa-B activation in a T-cell receptor/CD3-dependent manner. Recruits CTNNB1 to caveolar membranes and may regulate CTNNB1-mediated signaling through the Wnt pathway. Negatively regulates TGFB1-mediated activation of SMAD2/3 by mediating the internalization of TGFBR1 from membrane rafts leading to its subsequent degradation. Binds 20(S)-hydroxycholesterol (20(S)-OHC). The sequence is that of Caveolin-1 (CAV1) from Rhinolophus ferrumequinum (Greater horseshoe bat).